The following is a 259-amino-acid chain: Dickkopf-related protein 2 (259 aa).

A signal peptide spans 1 to 33 (MAALMRVKDSSRCLLLLAAVLMVESSQLGSSRA). The interval 42–70 (LGGETPAQSANRSAGMNQGLAFGGSKKGK) is disordered. Over residues 47–57 (PAQSANRSAGM) the composition is skewed to polar residues. Residue Asn52 is glycosylated (N-linked (GlcNAc...) asparagine). Residues 78–127 (CSSDKECEVGRYCHSPHQGSSACMLCRRKKKRCHRDGMCCPGTRCNNGIC) form a DKK-type Cys-1 region. Disulfide bonds link Cys183–Cys195, Cys189–Cys204, Cys194–Cys231, Cys214–Cys239, and Cys233–Cys256. The DKK-type Cys-2 stretch occupies residues 183 to 256 (CLRSSDCIDG…YSSKARLHVC (74 aa)).

This sequence belongs to the dickkopf family. In terms of assembly, interacts with LRP5 and LRP6. In terms of processing, may be proteolytically processed by a furin-like protease.

It is found in the secreted. Its function is as follows. Antagonizes canonical Wnt signaling by inhibiting LRP5/6 interaction with Wnt and by forming a ternary complex with the transmembrane protein KREMEN that promotes internalization of LRP5/6. DKKs play an important role in vertebrate development, where they locally inhibit Wnt regulated processes such as antero-posterior axial patterning, limb development, somitogenesis and eye formation. In the adult, Dkks are implicated in bone formation and bone disease, cancer and Alzheimer disease. The protein is Dickkopf-related protein 2 of Mus musculus (Mouse).